The chain runs to 317 residues: Putative peptide import ATP-binding protein BruAb2_0797 (317 aa).

One can recognise an ABC transporter domain in the interval Leu-7 to Leu-250. Gly-43–Thr-50 provides a ligand contact to ATP.

It belongs to the ABC transporter superfamily. As to quaternary structure, the complex is composed of two ATP-binding proteins (BruAb2_0796 and BruAb2_0797), two transmembrane proteins (BruAb2_0794) and a solute-binding protein (BruAb2_0792).

Its subcellular location is the cell inner membrane. Probably part of an ABC transporter complex that could be involved in peptide import. Probably responsible for energy coupling to the transport system. The polypeptide is Putative peptide import ATP-binding protein BruAb2_0797 (Brucella abortus biovar 1 (strain 9-941)).